Reading from the N-terminus, the 160-residue chain is NADH-quinone oxidoreductase subunit I (160 aa).

2 4Fe-4S ferredoxin-type domains span residues leucine 51–alanine 81 and valine 91–asparagine 120. Positions 61, 64, 67, 71, 100, 103, 106, and 110 each coordinate [4Fe-4S] cluster.

Belongs to the complex I 23 kDa subunit family. NDH-1 is composed of 14 different subunits. Subunits NuoA, H, J, K, L, M, N constitute the membrane sector of the complex. [4Fe-4S] cluster is required as a cofactor.

Its subcellular location is the cell inner membrane. The catalysed reaction is a quinone + NADH + 5 H(+)(in) = a quinol + NAD(+) + 4 H(+)(out). Functionally, NDH-1 shuttles electrons from NADH, via FMN and iron-sulfur (Fe-S) centers, to quinones in the respiratory chain. The immediate electron acceptor for the enzyme in this species is believed to be ubiquinone. Couples the redox reaction to proton translocation (for every two electrons transferred, four hydrogen ions are translocated across the cytoplasmic membrane), and thus conserves the redox energy in a proton gradient. The polypeptide is NADH-quinone oxidoreductase subunit I (Anaplasma marginale (strain St. Maries)).